Consider the following 250-residue polypeptide: Deoxynucleoside-5'-monophosphate kinase (250 aa).

ATP-binding residues include Gly14, Asp16, and Thr17. Positions 44, 65, 130, 137, 138, 150, 170, 172, 176, and 210 each coordinate dGMP.

The protein belongs to the dNMP kinase family. In terms of assembly, monomer.

It carries out the reaction a 2'-deoxyribonucleoside 5'-phosphate + ATP = a 2'-deoxyribonucleoside 5'-diphosphate + ADP. Its function is as follows. Allows the synthesis of deoxyribonucleoside triphosphates necessary for the rapid viral DNA replication. Phosphorylates all four dNMPs. The enzyme had the highest activity with dAMP and had about 30% less activity with dTMP and dGMP, respectively. The lowest activity was observed with dCMP as the substrate (about 35% of that with dAMP). The sequence is that of Deoxynucleoside-5'-monophosphate kinase from Escherichia coli (Enterobacteria phage T5).